A 275-amino-acid polypeptide reads, in one-letter code: Tryptophan synthase alpha chain (275 aa).

Residues Glu-60 and Asp-71 each act as proton acceptor in the active site.

Belongs to the TrpA family. As to quaternary structure, tetramer of two alpha and two beta chains.

It catalyses the reaction (1S,2R)-1-C-(indol-3-yl)glycerol 3-phosphate + L-serine = D-glyceraldehyde 3-phosphate + L-tryptophan + H2O. The protein operates within amino-acid biosynthesis; L-tryptophan biosynthesis; L-tryptophan from chorismate: step 5/5. Functionally, the alpha subunit is responsible for the aldol cleavage of indoleglycerol phosphate to indole and glyceraldehyde 3-phosphate. The protein is Tryptophan synthase alpha chain of Prochlorococcus marinus (strain MIT 9313).